Consider the following 109-residue polypeptide: Large ribosomal subunit protein uL22 (109 aa).

This sequence belongs to the universal ribosomal protein uL22 family. As to quaternary structure, part of the 50S ribosomal subunit.

This protein binds specifically to 23S rRNA; its binding is stimulated by other ribosomal proteins, e.g. L4, L17, and L20. It is important during the early stages of 50S assembly. It makes multiple contacts with different domains of the 23S rRNA in the assembled 50S subunit and ribosome. Functionally, the globular domain of the protein is located near the polypeptide exit tunnel on the outside of the subunit, while an extended beta-hairpin is found that lines the wall of the exit tunnel in the center of the 70S ribosome. The polypeptide is Large ribosomal subunit protein uL22 (Cupriavidus metallidurans (strain ATCC 43123 / DSM 2839 / NBRC 102507 / CH34) (Ralstonia metallidurans)).